The sequence spans 94 residues: Large ribosomal subunit protein eL42 (94 aa).

Zn(2+)-binding residues include Cys11, Cys14, Cys71, and Cys74. Residues 11-74 form a C4-type zinc finger; sequence CPFCKRHTIH…LDLRFRCTVC (64 aa).

This sequence belongs to the eukaryotic ribosomal protein eL42 family. As to quaternary structure, part of the 50S ribosomal subunit. Zn(2+) is required as a cofactor.

Its function is as follows. Binds to the 23S rRNA. In Pyrococcus abyssi (strain GE5 / Orsay), this protein is Large ribosomal subunit protein eL42.